Consider the following 290-residue polypeptide: MEGKEDKQQQHKIEDAGILYVTEKEEFKHEKKPGKSIQHSKPCVGRGRVYYAKFINTNVRTCNEPVPYIDVKKEPENQGDWWPHGKGLENPFQPPYDTKSTQRSDFKKPTCPLVSPVKHSKLQKPSYGIVPLVSPDASAELQRNFKEHISFIHQYDARKTPNEPIRGKRHGVFVQTEIKPGSRPTVPERTEVLLNASGSCSSEQSKKTEKGNSAESKMISPGLCRQNSQELLETKTHLSETDIRVAANASLRRPEKREKTAKVFQIAVVNALLTRHDPLSPPIKSQDKSG.

The tract at residues 76 to 112 (ENQGDWWPHGKGLENPFQPPYDTKSTQRSDFKKPTCP) is disordered. Mn regions lie at residues 128–160 (GIVPLVSPDASAELQRNFKEHISFIHQYDARKT) and 213–246 (SAESKMISPGLCRQNSQELLETKTHLSETDIRVA). The disordered stretch occupies residues 197–228 (SGSCSSEQSKKTEKGNSAESKMISPGLCRQNS).

The protein resides in the cell projection. The protein localises to the cilium. In Bos taurus (Bovine), this protein is Ciliary microtubule inner protein 6 (CIMIP6).